Consider the following 224-residue polypeptide: dTTP/UTP pyrophosphatase (224 aa).

Asp77 serves as the catalytic Proton acceptor.

This sequence belongs to the Maf family. YhdE subfamily. A divalent metal cation serves as cofactor.

The protein resides in the cytoplasm. It catalyses the reaction dTTP + H2O = dTMP + diphosphate + H(+). The enzyme catalyses UTP + H2O = UMP + diphosphate + H(+). Functionally, nucleoside triphosphate pyrophosphatase that hydrolyzes dTTP and UTP. May have a dual role in cell division arrest and in preventing the incorporation of modified nucleotides into cellular nucleic acids. This is dTTP/UTP pyrophosphatase from Dehalococcoides mccartyi (strain ATCC BAA-2266 / KCTC 15142 / 195) (Dehalococcoides ethenogenes (strain 195)).